The following is a 599-amino-acid chain: ATP-dependent zinc metalloprotease FtsH 3 (599 aa).

Over 1–7 (MKYKKKN) the chain is Cytoplasmic. The chain crosses the membrane as a helical span at residues 8–28 (ILFITTIIVIYLAFLFNWLEI). At 29–128 (GIFKPKGESI…PFSWLLSIFS (100 aa)) the chain is on the extracellular side. A helical transmembrane segment spans residues 129–149 (ILLNFINVLSSLVFTIYIFLA). At 150–599 (IHRESGKLNS…IEQLVVNTKK (450 aa)) the chain is on the cytoplasmic side. 214 to 221 (GPPGTGKT) contributes to the ATP binding site. A Zn(2+)-binding site is contributed by His-436. Glu-437 is an active-site residue. Zn(2+) contacts are provided by His-440 and Asp-512.

The protein in the central section; belongs to the AAA ATPase family. This sequence in the C-terminal section; belongs to the peptidase M41 family. Homohexamer. Requires Zn(2+) as cofactor.

It localises to the cell membrane. In terms of biological role, acts as a processive, ATP-dependent zinc metallopeptidase for both cytoplasmic and membrane proteins. Plays a role in the quality control of integral membrane proteins. This is ATP-dependent zinc metalloprotease FtsH 3 from Phytoplasma mali (strain AT).